The primary structure comprises 373 residues: Queuine tRNA-ribosyltransferase (373 aa).

Asp-90 serves as the catalytic Proton acceptor. Substrate contacts are provided by residues 90–94 (DSGGF), Asp-144, Gln-193, and Gly-220. The RNA binding stretch occupies residues 251–257 (GVGTPED). Asp-270 acts as the Nucleophile in catalysis. The interval 275-279 (TRNAR) is RNA binding; important for wobble base 34 recognition. Zn(2+) is bound by residues Cys-308, Cys-310, Cys-313, and His-339.

This sequence belongs to the queuine tRNA-ribosyltransferase family. As to quaternary structure, homodimer. Within each dimer, one monomer is responsible for RNA recognition and catalysis, while the other monomer binds to the replacement base PreQ1. Zn(2+) is required as a cofactor.

It catalyses the reaction 7-aminomethyl-7-carbaguanine + guanosine(34) in tRNA = 7-aminomethyl-7-carbaguanosine(34) in tRNA + guanine. Its pathway is tRNA modification; tRNA-queuosine biosynthesis. In terms of biological role, catalyzes the base-exchange of a guanine (G) residue with the queuine precursor 7-aminomethyl-7-deazaguanine (PreQ1) at position 34 (anticodon wobble position) in tRNAs with GU(N) anticodons (tRNA-Asp, -Asn, -His and -Tyr). Catalysis occurs through a double-displacement mechanism. The nucleophile active site attacks the C1' of nucleotide 34 to detach the guanine base from the RNA, forming a covalent enzyme-RNA intermediate. The proton acceptor active site deprotonates the incoming PreQ1, allowing a nucleophilic attack on the C1' of the ribose to form the product. After dissociation, two additional enzymatic reactions on the tRNA convert PreQ1 to queuine (Q), resulting in the hypermodified nucleoside queuosine (7-(((4,5-cis-dihydroxy-2-cyclopenten-1-yl)amino)methyl)-7-deazaguanosine). This Campylobacter lari (strain RM2100 / D67 / ATCC BAA-1060) protein is Queuine tRNA-ribosyltransferase.